The primary structure comprises 219 residues: MTDHRTRFLQLALGADALRFGQFTLKSGRLSPYFFNAGRFDSGTKTAQLAQCYADAIDAAGVDFDLLFGPAYKGIPLATALACAYAGRGRDLPLAFNRKEAKDHGEGGTLIGAPLAGHKVLIVDDVITAGTAIREALGIIRAAGGVPSGIVVALDRQEIASEQDRRSAAQAVATEAGIPVIAVANLSDLLAFAAENADLVDFREPLLAYRGRYGTDTTG.

K26 is a 5-phospho-alpha-D-ribose 1-diphosphate binding site. 34-35 lines the orotate pocket; the sequence is FF. Residues 72–73, R98, K99, K102, H104, and 124–132 contribute to the 5-phospho-alpha-D-ribose 1-diphosphate site; these read YK and DDVITAGTA. Orotate is bound by residues T128 and R156.

Belongs to the purine/pyrimidine phosphoribosyltransferase family. PyrE subfamily. In terms of assembly, homodimer. Mg(2+) is required as a cofactor.

The catalysed reaction is orotidine 5'-phosphate + diphosphate = orotate + 5-phospho-alpha-D-ribose 1-diphosphate. It participates in pyrimidine metabolism; UMP biosynthesis via de novo pathway; UMP from orotate: step 1/2. In terms of biological role, catalyzes the transfer of a ribosyl phosphate group from 5-phosphoribose 1-diphosphate to orotate, leading to the formation of orotidine monophosphate (OMP). The protein is Orotate phosphoribosyltransferase of Xanthomonas oryzae pv. oryzae (strain MAFF 311018).